The primary structure comprises 85 residues: MAQIFNPNPGNTLDTVANALKEQANAANKDVNDAIKALQGTDNADNPALLAELQHKINKWSVIYNINSTVTRALRDLMQGILQKI.

Residues 13 to 41 (LDTVANALKEQANAANKDVNDAIKALQGT) adopt a coiled-coil conformation.

As to quaternary structure, the core secretion machinery of the T3SS is composed of approximately 20 different proteins, including cytoplasmic components, a base, an export apparatus and a needle. This subunit polymerizes and forms the helical needle filament. Forms a stable heterotrimeric complex with PscE and PscG in the cytoplasm, blocking it in a monomeric state and preventing its polymerization.

It is found in the secreted. It localises to the cell surface. Component of the type III secretion system (T3SS), also called injectisome, which is used to inject bacterial effector proteins into eukaryotic host cells, facilitating the establishment and dissemination of infection. PscF/SctF forms the external needle filament that protrudes from the bacterial surface. The protein is Type 3 secretion system needle filament protein of Pseudomonas aeruginosa (strain ATCC 15692 / DSM 22644 / CIP 104116 / JCM 14847 / LMG 12228 / 1C / PRS 101 / PAO1).